The chain runs to 118 residues: 5-hydroxyisourate hydrolase (118 aa).

Substrate-binding residues include His7, Arg46, and Tyr115.

The protein belongs to the transthyretin family. 5-hydroxyisourate hydrolase subfamily. Homotetramer.

The catalysed reaction is 5-hydroxyisourate + H2O = 5-hydroxy-2-oxo-4-ureido-2,5-dihydro-1H-imidazole-5-carboxylate + H(+). Catalyzes the hydrolysis of 5-hydroxyisourate (HIU) to 2-oxo-4-hydroxy-4-carboxy-5-ureidoimidazoline (OHCU). The polypeptide is 5-hydroxyisourate hydrolase (Brucella melitensis biotype 1 (strain ATCC 23456 / CCUG 17765 / NCTC 10094 / 16M)).